The sequence spans 312 residues: Olfactory receptor 10P22 (312 aa).

At 1–26 the chain is on the extracellular side; the sequence is MGDDNDTDITEFILLGFSGYGFLQGH. Asparagine 5 is a glycosylation site (N-linked (GlcNAc...) asparagine). The helical transmembrane segment at 27-47 threads the bilayer; that stretch reads LFWGVLCIYVVTLLGNSLIVL. Topologically, residues 48-57 are cytoplasmic; the sequence is LTLADSALHS. Residues 58 to 78 form a helical membrane-spanning segment; it reads PMYFFLRHFSVVEILYTTTIV. The Extracellular portion of the chain corresponds to 79–89; the sequence is PRMLADLRSSC. A helical membrane pass occupies residues 90-110; the sequence is PTIPLASCFTQLYFFALFGIA. The Cytoplasmic segment spans residues 111–143; that stretch reads ECCLLTAMAYDRYAAICCPLHYTTLMSQGTYTG. A helical membrane pass occupies residues 144–164; that stretch reads LVGASYLAGVISGTTHSIFIF. Residues 165-205 lie on the Extracellular side of the membrane; that stretch reads TLPFRGAKTIHHFLCDILPVLRLATASTFWGEVGNLFVTIT. Residues 206–226 traverse the membrane as a helical segment; the sequence is FIFVPFLLIVASYACILVTIL. Residues 227–236 are Cytoplasmic-facing; the sequence is GVATSQGRQK. Residues 237 to 257 traverse the membrane as a helical segment; the sequence is LFSTCSSHLFVVILFFGTATV. At 258-271 the chain is on the extracellular side; sequence AYMRPQADSFGNTD. Residues 272–292 traverse the membrane as a helical segment; that stretch reads QILTLVYTVVTPMCNPFVYSL. Over 293–312 the chain is Cytoplasmic; the sequence is RNKEVTGAMRRLMKRYLWGP.

It belongs to the G-protein coupled receptor 1 family.

Its subcellular location is the cell membrane. Its function is as follows. Odorant receptor. In Mus musculus (Mouse), this protein is Olfactory receptor 10P22.